Reading from the N-terminus, the 101-residue chain is MDKSKRPFIKSKRSFRRRLPPIQSGDRIDYRNMSLISRFISEQGKILSRRVNRLTLKQQRLITSAIKQARILSLLPFLNNEKQFERTESTTRTANFRTKNK.

This sequence belongs to the bacterial ribosomal protein bS18 family. As to quaternary structure, component of the chloroplast small ribosomal subunit (SSU). Mature 70S chloroplast ribosomes of higher plants consist of a small (30S) and a large (50S) subunit. The 30S small subunit contains 1 molecule of ribosomal RNA (16S rRNA) and 24 different proteins. The 50S large subunit contains 3 rRNA molecules (23S, 5S and 4.5S rRNA) and 33 different proteins.

The protein localises to the plastid. It localises to the chloroplast. In terms of biological role, component of the chloroplast ribosome (chloro-ribosome), a dedicated translation machinery responsible for the synthesis of chloroplast genome-encoded proteins, including proteins of the transcription and translation machinery and components of the photosynthetic apparatus. This chain is Small ribosomal subunit protein bS18c (RPS18), found in Spinacia oleracea (Spinach).